The following is a 187-amino-acid chain: Protein GrpE (187 aa).

A disordered region spans residues 1–30; the sequence is MEKKETKNETEKTNKQDNKNTKSQKKENLN.

It belongs to the GrpE family. Homodimer.

The protein resides in the cytoplasm. Participates actively in the response to hyperosmotic and heat shock by preventing the aggregation of stress-denatured proteins, in association with DnaK and GrpE. It is the nucleotide exchange factor for DnaK and may function as a thermosensor. Unfolded proteins bind initially to DnaJ; upon interaction with the DnaJ-bound protein, DnaK hydrolyzes its bound ATP, resulting in the formation of a stable complex. GrpE releases ADP from DnaK; ATP binding to DnaK triggers the release of the substrate protein, thus completing the reaction cycle. Several rounds of ATP-dependent interactions between DnaJ, DnaK and GrpE are required for fully efficient folding. The protein is Protein GrpE of Borreliella afzelii (strain PKo) (Borrelia afzelii).